Reading from the N-terminus, the 335-residue chain is Phosphate acyltransferase (335 aa).

This sequence belongs to the PlsX family. In terms of assembly, homodimer. Probably interacts with PlsY.

It localises to the cytoplasm. The catalysed reaction is a fatty acyl-[ACP] + phosphate = an acyl phosphate + holo-[ACP]. It functions in the pathway lipid metabolism; phospholipid metabolism. Its function is as follows. Catalyzes the reversible formation of acyl-phosphate (acyl-PO(4)) from acyl-[acyl-carrier-protein] (acyl-ACP). This enzyme utilizes acyl-ACP as fatty acyl donor, but not acyl-CoA. The protein is Phosphate acyltransferase of Streptococcus uberis (strain ATCC BAA-854 / 0140J).